Reading from the N-terminus, the 490-residue chain is Transmembrane protein 185-like (490 aa).

Over residues 1 to 31 (MIENENTSLLSTSSSSTSSSPNNANSPSSLN) the composition is skewed to low complexity. 2 disordered regions span residues 1 to 151 (MIEN…SKYK) and 455 to 490 (NMIN…ISNL). Residues 47–59 (TSGNNSPSAQITK) are compositionally biased toward polar residues. Composition is skewed to low complexity over residues 66-80 (SNNS…NSRS) and 89-108 (NNNN…NNIN). Over residues 109–125 (KHNSIVYNKSNNKLNSI) the composition is skewed to polar residues. Gly residues predominate over residues 133–145 (QGGGGGNGNGNGN). Over residues 463–472 (SESESDDETE) the composition is skewed to acidic residues.

The protein belongs to the TMEM185 family.

In Dictyostelium discoideum (Social amoeba), this protein is Transmembrane protein 185-like.